The following is a 296-amino-acid chain: Glycine--tRNA ligase alpha subunit (296 aa).

This sequence belongs to the class-II aminoacyl-tRNA synthetase family. As to quaternary structure, tetramer of two alpha and two beta subunits.

It localises to the cytoplasm. It catalyses the reaction tRNA(Gly) + glycine + ATP = glycyl-tRNA(Gly) + AMP + diphosphate. This chain is Glycine--tRNA ligase alpha subunit, found in Francisella philomiragia subsp. philomiragia (strain ATCC 25017 / CCUG 19701 / FSC 153 / O#319-036).